Consider the following 416-residue polypeptide: Glutamyl-tRNA reductase 1 (416 aa).

Substrate contacts are provided by residues 57–60 (TCNR), Ser113, 118–120 (DFE), and Gln124. Residue Cys58 is the Nucleophile of the active site. Residue 193–198 (GTGKIG) participates in NADP(+) binding.

This sequence belongs to the glutamyl-tRNA reductase family. Homodimer.

The catalysed reaction is (S)-4-amino-5-oxopentanoate + tRNA(Glu) + NADP(+) = L-glutamyl-tRNA(Glu) + NADPH + H(+). It participates in porphyrin-containing compound metabolism; protoporphyrin-IX biosynthesis; 5-aminolevulinate from L-glutamyl-tRNA(Glu): step 1/2. Catalyzes the NADPH-dependent reduction of glutamyl-tRNA(Glu) to glutamate 1-semialdehyde (GSA). This chain is Glutamyl-tRNA reductase 1, found in Flavobacterium johnsoniae (strain ATCC 17061 / DSM 2064 / JCM 8514 / BCRC 14874 / CCUG 350202 / NBRC 14942 / NCIMB 11054 / UW101) (Cytophaga johnsonae).